Consider the following 308-residue polypeptide: MQEKISKFEDFLTQLQQNITTALEQHETNAAKFISDKWQKPDTPDQKLKGYGNSMIIEGGEIFEKGVVAFSRVHGSELPPSATAKRQELAGKSFIATGLSLVIHPRNPFVPTSHANFRIFIAGADTDNPIWWFGGGFDLTPYYPFEEDAIHWHQTAKNICDKHDKTYYPKFKKWCDEYFYLKHRDEYRGVGGLFFDDLNDKSFDECFNFVTDCANSYLDAYIPIVAQRKNIEYSQKHKDFQLYRRGRYVEFNLVFDRGTIFGLQSGGRTESILSSMPPMATWKYNWQPEPGSEEEKVYQYIKPRDWIK.

Residue serine 100 participates in substrate binding. A divalent metal cation-binding residues include histidine 104 and histidine 114. Residue histidine 114 is the Proton donor of the active site. 116-118 provides a ligand contact to substrate; that stretch reads NFR. A divalent metal cation-binding residues include histidine 153 and histidine 183. Residues 248 to 283 are important for dimerization; the sequence is YVEFNLVFDRGTIFGLQSGGRTESILSSMPPMATWK. 266-268 contacts substrate; the sequence is GGR.

It belongs to the aerobic coproporphyrinogen-III oxidase family. As to quaternary structure, homodimer. A divalent metal cation serves as cofactor.

It localises to the cytoplasm. The catalysed reaction is coproporphyrinogen III + O2 + 2 H(+) = protoporphyrinogen IX + 2 CO2 + 2 H2O. It functions in the pathway porphyrin-containing compound metabolism; protoporphyrin-IX biosynthesis; protoporphyrinogen-IX from coproporphyrinogen-III (O2 route): step 1/1. Involved in the heme biosynthesis. Catalyzes the aerobic oxidative decarboxylation of propionate groups of rings A and B of coproporphyrinogen-III to yield the vinyl groups in protoporphyrinogen-IX. This Francisella tularensis subsp. holarctica (strain LVS) protein is Oxygen-dependent coproporphyrinogen-III oxidase.